The chain runs to 367 residues: Anhydro-N-acetylmuramic acid kinase (367 aa).

13 to 20 contacts ATP; the sequence is GTSMDGAD.

This sequence belongs to the anhydro-N-acetylmuramic acid kinase family.

It carries out the reaction 1,6-anhydro-N-acetyl-beta-muramate + ATP + H2O = N-acetyl-D-muramate 6-phosphate + ADP + H(+). The protein operates within amino-sugar metabolism; 1,6-anhydro-N-acetylmuramate degradation. It participates in cell wall biogenesis; peptidoglycan recycling. Its function is as follows. Catalyzes the specific phosphorylation of 1,6-anhydro-N-acetylmuramic acid (anhMurNAc) with the simultaneous cleavage of the 1,6-anhydro ring, generating MurNAc-6-P. Is required for the utilization of anhMurNAc either imported from the medium or derived from its own cell wall murein, and thus plays a role in cell wall recycling. In Neisseria meningitidis serogroup C / serotype 2a (strain ATCC 700532 / DSM 15464 / FAM18), this protein is Anhydro-N-acetylmuramic acid kinase.